Here is a 716-residue protein sequence, read N- to C-terminus: Ciliary WD repeat-containing protein ctxp80 (716 aa).

The interval Met1 to Glu53 is disordered. Over residues Gly8–Asn21 the composition is skewed to polar residues. The span at Glu23–Glu53 shows a compositional bias: basic and acidic residues. 10 WD repeats span residues Tyr167–Arg208, Lys213–Lys254, Ser257–Lys297, Gly305–Asp343, His345–Thr382, His424–Leu462, Asp529–Thr568, Ala571–Ser610, Thr639–Pro678, and Gly683–Lys715.

It belongs to the WD repeat EMAP family.

This chain is Ciliary WD repeat-containing protein ctxp80, found in Euplotoides octocarinatus (Freshwater ciliate).